Consider the following 466-residue polypeptide: UDP-N-acetylmuramate--L-alanine ligase (466 aa).

119–125 (GTHGKTT) contributes to the ATP binding site.

It belongs to the MurCDEF family.

The protein resides in the cytoplasm. The enzyme catalyses UDP-N-acetyl-alpha-D-muramate + L-alanine + ATP = UDP-N-acetyl-alpha-D-muramoyl-L-alanine + ADP + phosphate + H(+). Its pathway is cell wall biogenesis; peptidoglycan biosynthesis. Cell wall formation. The sequence is that of UDP-N-acetylmuramate--L-alanine ligase from Cytophaga hutchinsonii (strain ATCC 33406 / DSM 1761 / CIP 103989 / NBRC 15051 / NCIMB 9469 / D465).